A 687-amino-acid polypeptide reads, in one-letter code: Fimbrin-5 (687 aa).

An EF-hand domain is found at 7–74 (VLVSDPWLQS…KSVLDKSYPN (68 aa)). 4 consecutive Calponin-homology (CH) domains span residues 122-239 (ESEK…KIQM), 267-370 (LAPE…QHRN), 392-498 (SREE…RYTM), and 513-621 (EITD…YWSL). Actin-binding stretches follow at residues 122-370 (ESEK…QHRN) and 392-621 (SREE…YWSL). The segment at 628 to 687 (ESTVSEDATDDGDANSVAGEISNLSIDGASESSPTVQDQELLTKADNDEDEVDGENNKDA) is disordered. The segment covering 649–667 (SNLSIDGASESSPTVQDQE) has biased composition (polar residues).

As to quaternary structure, interacts with F-actin. Expressed in mature pollen.

The protein resides in the cytoplasm. The protein localises to the cytoskeleton. Cross-links actin filaments (F-actin) in a calcium independent manner. Induces the formation of actin bundles. Stabilizes and prevents F-actin depolymerization mediated by latrunculin B (LatB). The polypeptide is Fimbrin-5 (Arabidopsis thaliana (Mouse-ear cress)).